The primary structure comprises 64 residues: Small ribosomal subunit protein bS21 (64 aa).

The disordered stretch occupies residues 26–64; that stretch reads DGILSEARRRTRFERPPTRRKRKDAAKRRLAIKAARKAT. Residues 43 to 64 show a composition bias toward basic residues; the sequence is TRRKRKDAAKRRLAIKAARKAT.

It belongs to the bacterial ribosomal protein bS21 family.

The protein is Small ribosomal subunit protein bS21 of Dehalococcoides mccartyi (strain ATCC BAA-2100 / JCM 16839 / KCTC 5957 / BAV1).